A 103-amino-acid polypeptide reads, in one-letter code: METTNGTETWYESLHAVLKALNATLHSNLLCRPGPGLGPDNQTEERRASLPGRDDNSYMYILFVMFLFAVTVGSLILGYTRSRKVDKRSDPYHVYIKNRVSMI.

Residues Asn5, Asn22, and Asn41 are each glycosylated (N-linked (GlcNAc...) asparagine). Residues Arg32–Arg53 are disordered. The segment covering Thr43–Arg53 has biased composition (basic and acidic residues). A helical transmembrane segment spans residues Ser57–Leu77. Residues Phe68–Tyr79 form an interaction with KCNQ1 region. At Gly78–Ile103 the chain is on the cytoplasmic side.

It belongs to the potassium channel KCNE family. As to quaternary structure, interacts with KCNB1. Interacts with KCNC2. Associates with KCNC4/Kv3.4. Interacts with KCNQ1; associates with a KCNQ1:KCNE3 stoichiometry of 4:4; produces a current with nearly instantaneous activation with a linear current-voltage relationship and alters membrane raft localization; affects KCNQ1 structure and gating properties. Expressed in hippocampal neurons (at protein level). Widely expressed with highest levels in kidney and moderate levels in small intestine.

Its subcellular location is the cell membrane. It localises to the cytoplasm. The protein resides in the perikaryon. It is found in the cell projection. The protein localises to the dendrite. Its subcellular location is the membrane raft. Its function is as follows. Ancillary protein that functions as a regulatory subunit of the voltage-gated potassium (Kv) channel complex composed of pore-forming and potassium-conducting alpha subunits and of regulatory beta subunits. KCNE3 beta subunit modulates the gating kinetics and enhances stability of the channel complex. Alters the gating of the delayed rectifier Kv channel containing KCNB1 alpha subunit. Associates with KCNC4/Kv3.4 alpha subunit to form the subthreshold Kv channel in skeletal muscle and to establish the resting membrane potential (RMP) in muscle cells. Association with KCNQ1/KCLQT1 alpha subunit may form the intestinal cAMP-stimulated potassium channel involved in chloride secretion that produces a current with nearly instantaneous activation with a linear current-voltage relationship. In Homo sapiens (Human), this protein is Potassium voltage-gated channel subfamily E member 3.